Consider the following 231-residue polypeptide: 5'-methylthioadenosine/S-adenosylhomocysteine nucleosidase (231 aa).

Glutamate 12 serves as the catalytic Proton acceptor. Substrate-binding positions include glycine 78, isoleucine 153, and 174 to 175 (ME). Aspartate 198 serves as the catalytic Proton donor.

This sequence belongs to the PNP/UDP phosphorylase family. MtnN subfamily.

It catalyses the reaction S-adenosyl-L-homocysteine + H2O = S-(5-deoxy-D-ribos-5-yl)-L-homocysteine + adenine. The catalysed reaction is S-methyl-5'-thioadenosine + H2O = 5-(methylsulfanyl)-D-ribose + adenine. The enzyme catalyses 5'-deoxyadenosine + H2O = 5-deoxy-D-ribose + adenine. The protein operates within amino-acid biosynthesis; L-methionine biosynthesis via salvage pathway; S-methyl-5-thio-alpha-D-ribose 1-phosphate from S-methyl-5'-thioadenosine (hydrolase route): step 1/2. Its function is as follows. Catalyzes the irreversible cleavage of the glycosidic bond in both 5'-methylthioadenosine (MTA) and S-adenosylhomocysteine (SAH/AdoHcy) to adenine and the corresponding thioribose, 5'-methylthioribose and S-ribosylhomocysteine, respectively. Also cleaves 5'-deoxyadenosine, a toxic by-product of radical S-adenosylmethionine (SAM) enzymes, into 5-deoxyribose and adenine. The sequence is that of 5'-methylthioadenosine/S-adenosylhomocysteine nucleosidase from Shewanella sp. (strain W3-18-1).